Consider the following 253-residue polypeptide: MLSDVKIKVRDLNLYYGNFQALKNISLDIYKNEVTALIGPSGCGKSTFLRTLNRMNDLIPGVRIEGSILFDGVDIYKENFDVVELRKRVGMVFQSPNPFPKSVYENVAYAPKIHGLKDKRKLDEIVEKSLRGAALWDEVKDRLHKPATGLSGGQQQRLCIARALAIEPEVLLMDEPTSALDPISTMRIEELIQELKKKYTIVIVTHNMQQAARISDRTAFFLNGELIEMDRTEVIFTKPRDRRTEDYITGRFG.

The ABC transporter domain maps to 7 to 248 (IKVRDLNLYY…PRDRRTEDYI (242 aa)). 39–46 (GPSGCGKS) serves as a coordination point for ATP.

This sequence belongs to the ABC transporter superfamily. Phosphate importer (TC 3.A.1.7) family. In terms of assembly, the complex is composed of two ATP-binding proteins (PstB), two transmembrane proteins (PstC and PstA) and a solute-binding protein (PstS).

It is found in the cell membrane. The enzyme catalyses phosphate(out) + ATP + H2O = ADP + 2 phosphate(in) + H(+). In terms of biological role, part of the ABC transporter complex PstSACB involved in phosphate import. Responsible for energy coupling to the transport system. The protein is Phosphate import ATP-binding protein PstB of Carboxydothermus hydrogenoformans (strain ATCC BAA-161 / DSM 6008 / Z-2901).